Consider the following 512-residue polypeptide: GMP synthase [glutamine-hydrolyzing] (512 aa).

Positions 5–195 (GIVILDFGSQ…IFGIAKAEKN (191 aa)) constitute a Glutamine amidotransferase type-1 domain. Cys-82 serves as the catalytic Nucleophile. Catalysis depends on residues His-169 and Glu-171. The GMPS ATP-PPase domain maps to 196–387 (WSMENYIEST…LGIPDYMVDR (192 aa)). 223–229 (SGGVDSS) contacts ATP.

In terms of assembly, homodimer.

It carries out the reaction XMP + L-glutamine + ATP + H2O = GMP + L-glutamate + AMP + diphosphate + 2 H(+). The protein operates within purine metabolism; GMP biosynthesis; GMP from XMP (L-Gln route): step 1/1. Its function is as follows. Catalyzes the synthesis of GMP from XMP. The chain is GMP synthase [glutamine-hydrolyzing] from Fusobacterium nucleatum subsp. nucleatum (strain ATCC 25586 / DSM 15643 / BCRC 10681 / CIP 101130 / JCM 8532 / KCTC 2640 / LMG 13131 / VPI 4355).